The sequence spans 758 residues: G-protein alpha subunit activating protein gbas-1 (758 aa).

Over residues 30 to 48 the composition is skewed to acidic residues; it reads LDEVDNADFEREDDEEEVL. The tract at residues 30–70 is disordered; sequence LDEVDNADFEREDDEEEVLSEPSESPYTSTPKSSKRVNKTR. Residues 49–61 are compositionally biased toward low complexity; that stretch reads SEPSESPYTSTPK. Positions 653–666 match the GBA motif; that stretch reads ETVTVEEFLMNSYS. Residues 668–690 are disordered; it reads AAPSTSTAPAPPKAPVTAPPAPQ. The span at 676–689 shows a compositional bias: pro residues; it reads PAPPKAPVTAPPAP.

As to quaternary structure, interacts (via GBA motif) with guanine nucleotide-binding protein G(o) subunit alpha goa-1 (in GDP-bound form); the interaction leads to activation of goa-1. As to expression, expressed in some neurons including the head and tail neurons, HSN and VC, in a subset of glial cells, in the distal tips cells and in the intestine.

Acts as a non-receptor guanine nucleotide exchange factor which binds to and activates G-protein alpha subunit goa-1. This Caenorhabditis elegans protein is G-protein alpha subunit activating protein gbas-1.